Reading from the N-terminus, the 150-residue chain is Large ribosomal subunit protein bL9 (150 aa).

The protein belongs to the bacterial ribosomal protein bL9 family.

Its function is as follows. Binds to the 23S rRNA. This is Large ribosomal subunit protein bL9 from Streptococcus pyogenes serotype M2 (strain MGAS10270).